The sequence spans 258 residues: F-box/SPRY domain-containing protein 1 (258 aa).

The 49-residue stretch at 6-54 (MEYAPNIPDNVLELIFSFLKLQDLRNCTLVCKSWYRFFCDENNEVWRAQ) folds into the F-box domain. Residues 64-256 (FKNDLLTVVP…ISMVYLGAPL (193 aa)) form the B30.2/SPRY domain.

This sequence belongs to the FBXO45/Fsn family. In terms of assembly, component of an E3 ubiquitin ligase complex composed of hiw and Fsn.

The protein resides in the synapse. It functions in the pathway protein modification; protein ubiquitination. In terms of biological role, required in the presynaptic motoneuron to down-regulate the levels of wnd and restrain synaptic terminal growth at the neuromuscular junction (NMJ). The protein is F-box/SPRY domain-containing protein 1 of Anopheles gambiae (African malaria mosquito).